Reading from the N-terminus, the 286-residue chain is Homoserine kinase (286 aa).

78-88 (PLARGLGSSSS) provides a ligand contact to ATP.

Belongs to the GHMP kinase family. Homoserine kinase subfamily.

It localises to the cytoplasm. The enzyme catalyses L-homoserine + ATP = O-phospho-L-homoserine + ADP + H(+). The protein operates within amino-acid biosynthesis; L-threonine biosynthesis; L-threonine from L-aspartate: step 4/5. Functionally, catalyzes the ATP-dependent phosphorylation of L-homoserine to L-homoserine phosphate. The polypeptide is Homoserine kinase (Streptococcus equi subsp. equi (strain 4047)).